Reading from the N-terminus, the 66-residue chain is Alpha-actitoxin-Ms11a-2 (66 aa).

Positions 1–24 (MASKIFFVLAVFLVMSAVLPESFA) are cleaved as a signal peptide. Disulfide bonds link Cys26–Cys41, Cys33–Cys46, and Cys40–Cys61.

It is found in the secreted. Its subcellular location is the nematocyst. In terms of biological role, alpha-toxins act on postsynaptic membranes, they bind to the nicotinic acetylcholine receptors (nAChR) and thus inhibit them. This toxin competes with alpha-bungarotoxin for binding to orthosteric sites on muscle-type T.carlifornicus (IC(50)=1080 nM) and human alpha-7/CHRNA7 nAChRs (IC(50)=14.13 uM). This chain is Alpha-actitoxin-Ms11a-2, found in Metridium senile (Brown sea anemone).